The primary structure comprises 222 residues: Vacuolar protein sorting-associated protein 2 homolog 2 (222 aa).

Coiled-coil stretches lie at residues 26–83 (RGIE…AQIR) and 143–222 (SEAI…LRRI). Residues 179 to 222 (SSAPKGRIATKTAAPPASTAATNKNSESSEVDELEKRLASLRRI) are disordered. Residues 187 to 203 (ATKTAAPPASTAATNKN) are compositionally biased toward low complexity.

It belongs to the SNF7 family. As to quaternary structure, component of the endosomal sorting required for transport complex III (ESCRT-III), composed at least of VPS2, VPS20, VPS24 and VPS32. Interacts with CHMP1A, CHMP1B and VPS60-1.

It localises to the endosome. Its function is as follows. Component of the ESCRT-III complex, which is required for multivesicular bodies (MVBs) formation and sorting of endosomal cargo proteins into MVBs. The ESCRT-III complex is probably involved in the concentration of MVB cargo. This Arabidopsis thaliana (Mouse-ear cress) protein is Vacuolar protein sorting-associated protein 2 homolog 2 (VPS2.2).